Consider the following 191-residue polypeptide: Accessory gene regulator protein B (191 aa).

Helical transmembrane passes span isoleucine 45 to leucine 65, serine 81 to isoleucine 101, isoleucine 108 to isoleucine 128, isoleucine 144 to phenylalanine 164, and asparagine 165 to proline 185.

Belongs to the AgrB family.

Its subcellular location is the cell membrane. In terms of biological role, essential for the production of a quorum sensing system signal molecule, the autoinducing peptide (AIP). This quorum sensing system is responsible for the regulation of the expression of virulence factor genes. Involved in the proteolytic processing of AgrD, the precursor of AIP. This chain is Accessory gene regulator protein B, found in Staphylococcus carnosus (strain TM300).